The sequence spans 268 residues: Leucyl/phenylalanyl-tRNA--protein transferase (268 aa).

It belongs to the L/F-transferase family.

The protein localises to the cytoplasm. The catalysed reaction is N-terminal L-lysyl-[protein] + L-leucyl-tRNA(Leu) = N-terminal L-leucyl-L-lysyl-[protein] + tRNA(Leu) + H(+). It carries out the reaction N-terminal L-arginyl-[protein] + L-leucyl-tRNA(Leu) = N-terminal L-leucyl-L-arginyl-[protein] + tRNA(Leu) + H(+). The enzyme catalyses L-phenylalanyl-tRNA(Phe) + an N-terminal L-alpha-aminoacyl-[protein] = an N-terminal L-phenylalanyl-L-alpha-aminoacyl-[protein] + tRNA(Phe). Functionally, functions in the N-end rule pathway of protein degradation where it conjugates Leu, Phe and, less efficiently, Met from aminoacyl-tRNAs to the N-termini of proteins containing an N-terminal arginine or lysine. In Zymomonas mobilis subsp. mobilis (strain ATCC 31821 / ZM4 / CP4), this protein is Leucyl/phenylalanyl-tRNA--protein transferase.